Reading from the N-terminus, the 453-residue chain is 3-phosphoshikimate 1-carboxyvinyltransferase (453 aa).

Residues 1–25 (MSHDSEPQPVTAHPAGPLTGALKPP) form a disordered region. 3-phosphoshikimate is bound by residues K28, S29, and R33. A phosphoenolpyruvate-binding site is contributed by K28. G101 and R129 together coordinate phosphoenolpyruvate. 3-phosphoshikimate-binding residues include S175, Q177, D330, and K357. Q177 contributes to the phosphoenolpyruvate binding site. The active-site Proton acceptor is the D330. 2 residues coordinate phosphoenolpyruvate: R361 and R405.

Belongs to the EPSP synthase family. As to quaternary structure, monomer.

The protein resides in the cytoplasm. It catalyses the reaction 3-phosphoshikimate + phosphoenolpyruvate = 5-O-(1-carboxyvinyl)-3-phosphoshikimate + phosphate. The protein operates within metabolic intermediate biosynthesis; chorismate biosynthesis; chorismate from D-erythrose 4-phosphate and phosphoenolpyruvate: step 6/7. Catalyzes the transfer of the enolpyruvyl moiety of phosphoenolpyruvate (PEP) to the 5-hydroxyl of shikimate-3-phosphate (S3P) to produce enolpyruvyl shikimate-3-phosphate and inorganic phosphate. The sequence is that of 3-phosphoshikimate 1-carboxyvinyltransferase from Methylorubrum populi (strain ATCC BAA-705 / NCIMB 13946 / BJ001) (Methylobacterium populi).